A 141-amino-acid chain; its full sequence is Putative pre-16S rRNA nuclease (141 aa).

It belongs to the YqgF nuclease family.

It is found in the cytoplasm. Could be a nuclease involved in processing of the 5'-end of pre-16S rRNA. The chain is Putative pre-16S rRNA nuclease from Pseudomonas putida (strain ATCC 47054 / DSM 6125 / CFBP 8728 / NCIMB 11950 / KT2440).